Consider the following 563-residue polypeptide: Inositol-3-phosphate synthase 1-B (563 aa).

This sequence belongs to the myo-inositol 1-phosphate synthase family. It depends on NAD(+) as a cofactor.

It localises to the cytoplasm. It catalyses the reaction D-glucose 6-phosphate = 1D-myo-inositol 3-phosphate. It participates in polyol metabolism; myo-inositol biosynthesis; myo-inositol from D-glucose 6-phosphate: step 1/2. Key enzyme in myo-inositol biosynthesis pathway that catalyzes the conversion of glucose 6-phosphate to 1-myo-inositol 1-phosphate in a NAD-dependent manner. Rate-limiting enzyme in the synthesis of all inositol-containing compounds. The protein is Inositol-3-phosphate synthase 1-B (isyna1-b) of Xenopus laevis (African clawed frog).